A 1392-amino-acid polypeptide reads, in one-letter code: DNA-directed RNA polymerase subunit beta'' (1392 aa).

The Zn(2+) site is built by Cys-224, Cys-295, Cys-302, and Cys-305.

It belongs to the RNA polymerase beta' chain family. RpoC2 subfamily. As to quaternary structure, in plastids the minimal PEP RNA polymerase catalytic core is composed of four subunits: alpha, beta, beta', and beta''. When a (nuclear-encoded) sigma factor is associated with the core the holoenzyme is formed, which can initiate transcription. Zn(2+) serves as cofactor.

The protein resides in the plastid. The protein localises to the chloroplast. It carries out the reaction RNA(n) + a ribonucleoside 5'-triphosphate = RNA(n+1) + diphosphate. Its function is as follows. DNA-dependent RNA polymerase catalyzes the transcription of DNA into RNA using the four ribonucleoside triphosphates as substrates. This Solanum bulbocastanum (Wild potato) protein is DNA-directed RNA polymerase subunit beta''.